The sequence spans 419 residues: Cytosine permease (419 aa).

The Cytoplasmic portion of the chain corresponds to 1 to 19; sequence MSQDNNFSQGPVPQSARKG. A helical membrane pass occupies residues 20-39; sequence VLALTFVMLGLTFFSASMWT. Over 40 to 51 the chain is Periplasmic; the sequence is GGTLGTGLSYHD. Residues 52-71 form a helical membrane-spanning segment; the sequence is FFLAVLIGNLLLGIYTSFLG. Residues 72-100 lie on the Cytoplasmic side of the membrane; that stretch reads YIGAKTGLTTHLLARFSFGVKGSWLPSLL. The chain crosses the membrane as a helical span at residues 101-120; it reads LGGTQVGWFGVGVAMFAIPV. The Periplasmic portion of the chain corresponds to 121-127; the sequence is GKATGLD. A helical membrane pass occupies residues 128–147; sequence INLLIAVSGLLMTVTVFFGI. The Cytoplasmic portion of the chain corresponds to 148-152; sequence SALTV. A helical transmembrane segment spans residues 153 to 172; it reads LSVIAVPAIACLGGYSVWLA. Residues 173-192 lie on the Periplasmic side of the membrane; it reads VNGMGGLDALKAVVPAQPLD. Residues 193–212 form a helical membrane-spanning segment; it reads FNVALALVVGSFISAGTLTA. At 213–221 the chain is on the cytoplasmic side; that stretch reads DFVRFGRNA. The chain crosses the membrane as a helical span at residues 222-242; the sequence is KLAVLVAMVAFFLGNSLMFIF. At 243 to 257 the chain is on the periplasmic side; that stretch reads GAAGAAALGMADISD. A helical transmembrane segment spans residues 258–277; sequence VMIAQGLLLPAIVVLGLNIW. Topologically, residues 278-300 are cytoplasmic; the sequence is TTNDNALYASGLGFANITGMSSK. A helical transmembrane segment spans residues 301 to 320; it reads TLSVINGIIGTVCALWLYNN. Phenylalanine 321 is a topological domain (periplasmic). A helical transmembrane segment spans residues 322–341; sequence VGWLTFLSAAIPPVGGVIIA. Topologically, residues 342 to 358 are cytoplasmic; the sequence is DYLMNRRRYEHFATTRM. A helical transmembrane segment spans residues 359–378; that stretch reads MSVNWVAILAVALGIAAGHW. Residues 379–380 are Periplasmic-facing; it reads LP. Residues 381–400 traverse the membrane as a helical segment; sequence GIVPVNAVLGGALSYLILNP. At 401–419 the chain is on the cytoplasmic side; the sequence is ILNRKTTAAMTHVEANSVE.

Belongs to the purine-cytosine permease (2.A.39) family.

The protein localises to the cell inner membrane. Its function is as follows. Required for cytosine transport into the cell. The polypeptide is Cytosine permease (codB) (Escherichia coli O6:H1 (strain CFT073 / ATCC 700928 / UPEC)).